Reading from the N-terminus, the 136-residue chain is 2-hydroxyisobutanoyl-CoA mutase small subunit (136 aa).

The 129-residue stretch at 5–133 (PIRVLLAKVG…DSIRSLVAAR (129 aa)) folds into the B12-binding domain. Histidine 18 serves as a coordination point for adenosylcob(III)alamin.

Belongs to the acyl-CoA mutase small subunit family. As to quaternary structure, homotetramer composed of two large substrate-binding subunits (HcmA) and two small cobalamin-binding subunits (HcmB). The cofactor is adenosylcob(III)alamin.

The catalysed reaction is 2-hydroxyisobutanoyl-CoA = (3S)-3-hydroxybutanoyl-CoA. Functionally, together with HcmA, catalyzes the isomerization of 2-hydroxyisobutyryl-CoA and 3-hydroxybutyryl-CoA. Is specific for 2-hydroxyisobutyryl-CoA and (S)-3-hydroxybutyryl-CoA, and shows only very low activity with (R)-3-hydroxybutyryl-CoA, isobutyryl-CoA and butyryl-CoA. In vitro, can isomerize pivalyl-CoA and isovaleryl-CoA, with much lower efficiency. Plays a central role in the degradation of substrates bearing a tert-butyl moiety, such as the fuel oxygenate methyl tert-butyl ether (MTBE) and its metabolites. The sequence is that of 2-hydroxyisobutanoyl-CoA mutase small subunit from Aquincola tertiaricarbonis.